The chain runs to 166 residues: Ubiquitin-conjugating enzyme E2 13 (166 aa).

Residues 4–164 (QACLLLQKQL…VSRCVRKSQE (161 aa)) enclose the UBC core domain. C89 serves as the catalytic Glycyl thioester intermediate.

This sequence belongs to the ubiquitin-conjugating enzyme family.

It carries out the reaction S-ubiquitinyl-[E1 ubiquitin-activating enzyme]-L-cysteine + [E2 ubiquitin-conjugating enzyme]-L-cysteine = [E1 ubiquitin-activating enzyme]-L-cysteine + S-ubiquitinyl-[E2 ubiquitin-conjugating enzyme]-L-cysteine.. Its pathway is protein modification; protein ubiquitination. Its function is as follows. Accepts the ubiquitin from the E1 complex and catalyzes its covalent attachment to other proteins. Involved in the formation of multiubiquitin chains. Signal the protein for selective degradation. This is Ubiquitin-conjugating enzyme E2 13 (UBC13) from Arabidopsis thaliana (Mouse-ear cress).